A 113-amino-acid chain; its full sequence is Probable UPF0122 protein (113 aa).

Belongs to the UPF0122 family.

Might take part in the signal recognition particle (SRP) pathway. This is inferred from the conservation of its genetic proximity to ftsY/ffh. May be a regulatory protein. This Mycoplasma mycoides protein is Probable UPF0122 protein.